We begin with the raw amino-acid sequence, 1377 residues long: DNA-directed RNA polymerase subunit beta (1377 aa).

This sequence belongs to the RNA polymerase beta chain family. In terms of assembly, the RNAP catalytic core consists of 2 alpha, 1 beta, 1 beta' and 1 omega subunit. When a sigma factor is associated with the core the holoenzyme is formed, which can initiate transcription.

The catalysed reaction is RNA(n) + a ribonucleoside 5'-triphosphate = RNA(n+1) + diphosphate. In terms of biological role, DNA-dependent RNA polymerase catalyzes the transcription of DNA into RNA using the four ribonucleoside triphosphates as substrates. In Brucella suis biovar 1 (strain 1330), this protein is DNA-directed RNA polymerase subunit beta.